The primary structure comprises 248 residues: uncharacterized protein (248 aa).

One can recognise an ABC transporter domain in the interval 7–246 (VQLSNLSWTF…PASTILLPTS (240 aa)). 43-50 (GQSGSGKS) is an ATP binding site.

This sequence belongs to the ABC transporter superfamily.

This is an uncharacterized protein from Mycobacterium tuberculosis (strain CDC 1551 / Oshkosh).